The primary structure comprises 226 residues: Clarin-3 (226 aa).

The chain crosses the membrane as a helical span at residues 8 to 28 (LMFLSGFLTSLGSVVVICSIL). N-linked (GlcNAc...) asparagine glycosylation is found at asparagine 46 and asparagine 83. The next 3 helical transmembrane spans lie at 92–112 (VVII…MFTF), 128–148 (GVYT…VLFV), and 181–201 (FWLI…IIFY).

The protein belongs to the clarin family.

It is found in the membrane. The chain is Clarin-3 (Clrn3) from Rattus norvegicus (Rat).